Consider the following 315-residue polypeptide: L-lactate dehydrogenase (315 aa).

Residues V16, D37, and 81 to 82 (GA) each bind NAD(+). Substrate contacts are provided by residues Q84, R90, and 122-125 (NPVD). NAD(+) contacts are provided by residues 120-122 (VSN) and S145. Substrate is bound at residue 150–153 (DTAR). The beta-D-fructose 1,6-bisphosphate site is built by R155 and H170. H177 serves as the catalytic Proton acceptor. Y224 carries the post-translational modification Phosphotyrosine. T233 contributes to the substrate binding site.

Belongs to the LDH/MDH superfamily. LDH family. As to quaternary structure, homotetramer.

It is found in the cytoplasm. It carries out the reaction (S)-lactate + NAD(+) = pyruvate + NADH + H(+). Its pathway is fermentation; pyruvate fermentation to lactate; (S)-lactate from pyruvate: step 1/1. With respect to regulation, allosterically activated by fructose 1,6-bisphosphate (FBP). Catalyzes the conversion of lactate to pyruvate. This chain is L-lactate dehydrogenase, found in Treponema denticola (strain ATCC 35405 / DSM 14222 / CIP 103919 / JCM 8153 / KCTC 15104).